The sequence spans 253 residues: MSTQGLVQLLANAQCHLRTSTNYNGVHTQFNSALNYKNNGTNTIDGSEAWCSSIVDTNQYIVAGCEVPRTFMCVALQGRGDADQWVTSYKIRYSLDNVSWFEYRNGAAVTGVTDRNTVVNHFFDTPIRARSIAIHPLTWNGHISLRCEFYTQPVQSSVTQVGADIYTGDNCALNTGSGKREVVVPVKFQFEFATLPKVALNFDQIDCTDATNQTRIGVQPRNITTKGFDCVFYTWNENKVYSLRADYIATALE.

Serine 2 carries the post-translational modification N-acetylserine. An F5/8 type C domain is found at 2–152; the sequence is STQGLVQLLA…ISLRCEFYTQ (151 aa). The Cell attachment site signature appears at 79–81; the sequence is RGD.

As to quaternary structure, tetramer of four different chains (A to D). As to expression, stalk cells.

The protein localises to the cytoplasm. Galactose- and N-acetylgalactosamine-binding lectin. May play a role in cell-substratum adhesion rather than in cell-cell adhesion. May be necessary for the maintenance of normal elongate morphology during aggregation. The chain is Discoidin-1 subunit A (dscA-1) from Dictyostelium discoideum (Social amoeba).